A 638-amino-acid chain; its full sequence is E3 ubiquitin-protein ligase TRIM47 (638 aa).

Position 1 is an N-acetylmethionine (methionine 1). Residues 9–58 (CPICLEPLREPVTLPCGHNFCLACLGALWPHRGASGAGGPGGAARCPLCQ) form an RING-type zinc finger. At threonine 72 the chain carries Phosphothreonine. The disordered stretch occupies residues 79–119 (LRQGSGPGSGPGPAPALAPEPSAPSALPSVPEPSAPCAPEP). 2 stretches are compositionally biased toward pro residues: residues 88–100 (GPGPAPALAPEPS) and 108–119 (VPEPSAPCAPEP). A B box-type zinc finger spans residues 177 to 217 (LEESLCPRHLRPLERYCRAERVCLCEACAAQEHRGHELVPL). 4 residues coordinate Zn(2+): cysteine 182, histidine 185, cysteine 204, and histidine 209. Residues 296–324 (MLGRSQGDLRRQEEQRSRLSRARQNLSQV) adopt a coiled-coil conformation. Disordered stretches follow at residues 300–322 (SQGDLRRQEEQRSRLSRARQNLS) and 384–411 (LRGPGGNEDGPQKLDSEADAEPQDLEST). The segment covering 302–312 (GDLRRQEEQRS) has biased composition (basic and acidic residues). One can recognise a B30.2/SPRY domain in the interval 410–631 (STNLLESEAP…LQIGPLKKSC (222 aa)). Serine 461 carries the post-translational modification Phosphoserine. At arginine 582 the chain carries Omega-N-methylarginine. Serine 588 bears the Phosphoserine mark.

Belongs to the TRIM/RBCC family. Low expression in most tissues. Higher expression in kidney tubular cells. Overexpressed in astrocytoma tumor cells.

The protein resides in the cytoplasm. The protein localises to the nucleus. The enzyme catalyses S-ubiquitinyl-[E2 ubiquitin-conjugating enzyme]-L-cysteine + [acceptor protein]-L-lysine = [E2 ubiquitin-conjugating enzyme]-L-cysteine + N(6)-ubiquitinyl-[acceptor protein]-L-lysine.. Its pathway is protein modification; protein ubiquitination. Functionally, E3 ubiquitin-protein ligase that mediates the ubiquitination and proteasomal degradation of CYLD. This Homo sapiens (Human) protein is E3 ubiquitin-protein ligase TRIM47.